A 293-amino-acid polypeptide reads, in one-letter code: Protease HtpX (293 aa).

The next 2 helical transmembrane spans lie at 4 to 24 and 34 to 54; these read IALF…VLSL and GLMI…LLMS. His139 is a Zn(2+) binding site. Residue Glu140 is part of the active site. His143 is a binding site for Zn(2+). Transmembrane regions (helical) follow at residues 158 to 178 and 193 to 213; these read VVNT…AGFM and LIYF…ASII. A Zn(2+)-binding site is contributed by Glu222.

This sequence belongs to the peptidase M48B family. Zn(2+) is required as a cofactor.

The protein resides in the cell inner membrane. This Escherichia fergusonii (strain ATCC 35469 / DSM 13698 / CCUG 18766 / IAM 14443 / JCM 21226 / LMG 7866 / NBRC 102419 / NCTC 12128 / CDC 0568-73) protein is Protease HtpX.